Here is a 366-residue protein sequence, read N- to C-terminus: tRNA-specific 2-thiouridylase MnmA (366 aa).

Residues 6–13 (AMSGGVDS) and Leu32 contribute to the ATP site. Cys101 (nucleophile) is an active-site residue. Cys101 and Cys199 form a disulfide bridge. Gly125 is an ATP binding site. Positions 149–151 (KDQ) are interaction with tRNA. Catalysis depends on Cys199, which acts as the Cysteine persulfide intermediate.

It belongs to the MnmA/TRMU family.

It localises to the cytoplasm. The catalysed reaction is S-sulfanyl-L-cysteinyl-[protein] + uridine(34) in tRNA + AH2 + ATP = 2-thiouridine(34) in tRNA + L-cysteinyl-[protein] + A + AMP + diphosphate + H(+). Catalyzes the 2-thiolation of uridine at the wobble position (U34) of tRNA, leading to the formation of s(2)U34. The sequence is that of tRNA-specific 2-thiouridylase MnmA from Corynebacterium diphtheriae (strain ATCC 700971 / NCTC 13129 / Biotype gravis).